A 1249-amino-acid chain; its full sequence is Calmodulin-regulated spectrin-associated protein 3 (1249 aa).

7 disordered regions span residues 183–205 (KTEQEAAQRASPAAPADGAAPAQ), 328–385 (PDGH…SMSH), 430–457 (VSSDSLGPPRPAPARTPTQPPPEPGDLP), 473–609 (LLPD…RLEE), 632–696 (LGKS…HEGL), 714–1029 (QRDM…SALA), and 1061–1111 (NNLG…TGPR). A Phosphothreonine modification is found at Thr-184. The segment covering 189 to 205 (AQRASPAAPADGAAPAQ) has biased composition (low complexity). Ser-193 is subject to Phosphoserine. The region spanning 203 to 312 (PAQPSIRYRK…LVVMLAELFM (110 aa)) is the Calponin-homology (CH) domain. Residues Ser-334, Ser-341, Ser-347, Ser-351, Ser-368, Ser-373, and Ser-382 each carry the phosphoserine modification. Residues 341–352 (SPPQNNSGSSSP) are compositionally biased toward low complexity. Residues 364–383 (GGPQSPLRGSTGSLKSSPSM) show a composition bias toward polar residues. A compositionally biased stretch (pro residues) spans 437–454 (PPRPAPARTPTQPPPEPG). Phosphoserine occurs at positions 547, 554, and 560. The span at 568–579 (AERKKQLVKAEA) shows a compositional bias: basic and acidic residues. Residues 594 to 604 (EALSSEMSELS) show a composition bias toward low complexity. Residues 594-628 (EALSSEMSELSARLEEKRRAIEAQKRRIEAIFAKH) are a coiled coil. A compositionally biased stretch (acidic residues) spans 647–657 (GEAEAEAEEAD). Ser-685 carries the post-translational modification Phosphoserine. Positions 696–729 (LGEYNRAVSKLSAALSSLQRDMQRLTDQQQRLLA) form a coiled coil. Residues 731 to 741 (PEAPGSAPPPA) show a composition bias toward pro residues. Positions 754–779 (AASPSPARRVPATRRSPGPGPSQSPR) are enriched in low complexity. Position 769 is a phosphoserine (Ser-769). The residue at position 799 (Thr-799) is a Phosphothreonine. The residue at position 814 (Ser-814) is a Phosphoserine. Polar residues predominate over residues 814-825 (SPSQVPVQTRSS). The segment covering 889 to 940 (YKDEDKPEDEMAQKRASLLERQQRRAEEARRRKQWQEVEKEQRREEAARLAQ) has biased composition (basic and acidic residues). The stretch at 896–935 (EDEMAQKRASLLERQQRRAEEARRRKQWQEVEKEQRREEA) forms a coiled coil. The segment covering 950-964 (VSAVPMATPAPAARA) has biased composition (low complexity). Residues 970 to 998 (VGPRKGDFTRQEYERRAQLKLMDDLDKVL) are compositionally biased toward basic and acidic residues. Residue Ser-1074 is modified to Phosphoserine. The CKK domain occupies 1109-1243 (GPRLYKEPSA…QGKKPTTPKK (135 aa)).

The protein belongs to the CAMSAP1 family. Interacts with PLEKHA7. Interacts with CAMSAP2. Interacts with KATNA1 and KATNB1; leading to regulate the length of CAMSAP3-decorated microtubule stretches. Interacts with AKAP9; regulating Golgi assembly in epithelial cells. Interacts with MACF1. Interacts with AKNA.

The protein resides in the cytoplasm. It is found in the cytoskeleton. It localises to the cell junction. Its subcellular location is the adherens junction. The protein localises to the cilium axoneme. The protein resides in the cilium basal body. Its function is as follows. Key microtubule-organizing protein that specifically binds the minus-end of non-centrosomal microtubules and regulates their dynamics and organization. Specifically recognizes growing microtubule minus-ends and autonomously decorates and stabilizes microtubule lattice formed by microtubule minus-end polymerization. Acts on free microtubule minus-ends that are not capped by microtubule-nucleating proteins or other factors and protects microtubule minus-ends from depolymerization. In addition, it also reduces the velocity of microtubule polymerization. Required for the biogenesis and the maintenance of zonula adherens by anchoring the minus-end of microtubules to zonula adherens and by recruiting the kinesin KIFC3 to those junctional sites. Required for orienting the apical-to-basal polarity of microtubules in epithelial cells: acts by tethering non-centrosomal microtubules to the apical cortex, leading to their longitudinal orientation. Plays a key role in early embryos, which lack centrosomes: accumulates at the microtubule bridges that connect pairs of cells and enables the formation of a non-centrosomal microtubule-organizing center that directs intracellular transport in the early embryo. Couples non-centrosomal microtubules with actin: interaction with MACF1 at the minus ends of non-centrosomal microtubules, tethers the microtubules to actin filaments, regulating focal adhesion size and cell migration. Plays a key role in the generation of non-centrosomal microtubules by accumulating in the pericentrosomal region and cooperating with KATNA1 to release non-centrosomal microtubules from the centrosome. Through the microtubule cytoskeleton, also regulates the organization of cellular organelles including the Golgi and the early endosomes. Through interaction with AKAP9, involved in translocation of Golgi vesicles in epithelial cells, where microtubules are mainly non-centrosomal. Plays an important role in motile cilia function by facilitatating proper orientation of basal bodies and formation of central microtubule pairs in motile cilia. The chain is Calmodulin-regulated spectrin-associated protein 3 from Homo sapiens (Human).